Here is a 344-residue protein sequence, read N- to C-terminus: Methionine import ATP-binding protein MetN (344 aa).

The ABC transporter domain occupies 2–241; that stretch reads IEIKSVNKVF…PKTELAHQFI (240 aa). 38–45 is a binding site for ATP; the sequence is GSSGAGKS.

Belongs to the ABC transporter superfamily. Methionine importer (TC 3.A.1.24) family. As to quaternary structure, the complex is composed of two ATP-binding proteins (MetN), two transmembrane proteins (MetI) and a solute-binding protein (MetQ).

It is found in the cell inner membrane. The catalysed reaction is L-methionine(out) + ATP + H2O = L-methionine(in) + ADP + phosphate + H(+). It catalyses the reaction D-methionine(out) + ATP + H2O = D-methionine(in) + ADP + phosphate + H(+). Part of the ABC transporter complex MetNIQ involved in methionine import. Responsible for energy coupling to the transport system. The chain is Methionine import ATP-binding protein MetN from Vibrio cholerae serotype O1 (strain ATCC 39315 / El Tor Inaba N16961).